A 241-amino-acid chain; its full sequence is Uridylate kinase (241 aa).

15-18 contacts ATP; it reads KLSG. An involved in allosteric activation by GTP region spans residues 23-28; sequence GAEGFG. A UMP-binding site is contributed by Gly57. ATP contacts are provided by Gly58 and Arg62. Residues Asp77 and 138 to 145 each bind UMP; that span reads TGNPFFTT. Positions 165, 171, and 174 each coordinate ATP.

Belongs to the UMP kinase family. As to quaternary structure, homohexamer.

It localises to the cytoplasm. It carries out the reaction UMP + ATP = UDP + ADP. Its pathway is pyrimidine metabolism; CTP biosynthesis via de novo pathway; UDP from UMP (UMPK route): step 1/1. Its activity is regulated as follows. Allosterically activated by GTP. Inhibited by UTP. In terms of biological role, catalyzes the reversible phosphorylation of UMP to UDP. The chain is Uridylate kinase from Serratia proteamaculans (strain 568).